The primary structure comprises 154 residues: SsrA-binding protein (154 aa).

Positions 123–142 are enriched in basic and acidic residues; sequence AEHDKRHTIKDRDWQREQGR. Residues 123–154 are disordered; it reads AEHDKRHTIKDRDWQREQGRLMRHKVSAPHKD. Positions 143–154 are enriched in basic residues; it reads LMRHKVSAPHKD.

It belongs to the SmpB family.

Its subcellular location is the cytoplasm. Required for rescue of stalled ribosomes mediated by trans-translation. Binds to transfer-messenger RNA (tmRNA), required for stable association of tmRNA with ribosomes. tmRNA and SmpB together mimic tRNA shape, replacing the anticodon stem-loop with SmpB. tmRNA is encoded by the ssrA gene; the 2 termini fold to resemble tRNA(Ala) and it encodes a 'tag peptide', a short internal open reading frame. During trans-translation Ala-aminoacylated tmRNA acts like a tRNA, entering the A-site of stalled ribosomes, displacing the stalled mRNA. The ribosome then switches to translate the ORF on the tmRNA; the nascent peptide is terminated with the 'tag peptide' encoded by the tmRNA and targeted for degradation. The ribosome is freed to recommence translation, which seems to be the essential function of trans-translation. The polypeptide is SsrA-binding protein (Leptothrix cholodnii (strain ATCC 51168 / LMG 8142 / SP-6) (Leptothrix discophora (strain SP-6))).